Consider the following 447-residue polypeptide: Argininosuccinate synthase (447 aa).

ATP contacts are provided by residues Ala17–Ser25 and Ala43. Position 99 (Tyr99) interacts with L-citrulline. Residues Gly129 and Thr131 each coordinate ATP. Residues Thr131, Asn135, and Asp136 each contribute to the L-aspartate site. Asn135 lines the L-citrulline pocket. An ATP-binding site is contributed by Asp136. L-citrulline-binding residues include Arg139 and Ser192. Asp194 is an ATP binding site. L-citrulline is bound by residues Thr201, Glu203, and Glu280.

This sequence belongs to the argininosuccinate synthase family. Type 2 subfamily. In terms of assembly, homotetramer.

It is found in the cytoplasm. The catalysed reaction is L-citrulline + L-aspartate + ATP = 2-(N(omega)-L-arginino)succinate + AMP + diphosphate + H(+). The protein operates within amino-acid biosynthesis; L-arginine biosynthesis; L-arginine from L-ornithine and carbamoyl phosphate: step 2/3. This Klebsiella pneumoniae (strain 342) protein is Argininosuccinate synthase.